A 212-amino-acid polypeptide reads, in one-letter code: Adenylate kinase (212 aa).

10–15 contacts ATP; that stretch reads GAGKGT. The segment at 30–59 is NMP; that stretch reads STGDMFRAAMANQTEMGTLAKSFIDKGELV. Residues Thr31, Arg36, 57 to 59, 86 to 89, and Gln93 each bind AMP; these read ELV and GYPR. Residues 127–159 are LID; it reads GRIINRKTGETYHKVFNPPADYNEDDYYQREDD. Residues Arg128 and 137 to 138 contribute to the ATP site; that span reads TY. AMP-binding residues include Arg156 and Arg167. Gln195 is an ATP binding site.

Belongs to the adenylate kinase family. In terms of assembly, monomer.

The protein resides in the cytoplasm. It carries out the reaction AMP + ATP = 2 ADP. It functions in the pathway purine metabolism; AMP biosynthesis via salvage pathway; AMP from ADP: step 1/1. Catalyzes the reversible transfer of the terminal phosphate group between ATP and AMP. Plays an important role in cellular energy homeostasis and in adenine nucleotide metabolism. The protein is Adenylate kinase of Streptococcus mutans serotype c (strain ATCC 700610 / UA159).